The primary structure comprises 373 residues: Phosphoserine aminotransferase (373 aa).

An L-glutamate-binding site is contributed by R47. Pyridoxal 5'-phosphate contacts are provided by residues 81-82 (AR), W113, T164, D185, and Q208. Position 209 is an N6-(pyridoxal phosphate)lysine (K209). 250–251 (NT) is a binding site for pyridoxal 5'-phosphate.

This sequence belongs to the class-V pyridoxal-phosphate-dependent aminotransferase family. SerC subfamily. As to quaternary structure, homodimer. Pyridoxal 5'-phosphate serves as cofactor.

The protein resides in the cytoplasm. It carries out the reaction O-phospho-L-serine + 2-oxoglutarate = 3-phosphooxypyruvate + L-glutamate. The catalysed reaction is 4-(phosphooxy)-L-threonine + 2-oxoglutarate = (R)-3-hydroxy-2-oxo-4-phosphooxybutanoate + L-glutamate. Its pathway is amino-acid biosynthesis; L-serine biosynthesis; L-serine from 3-phospho-D-glycerate: step 2/3. It participates in cofactor biosynthesis; pyridoxine 5'-phosphate biosynthesis; pyridoxine 5'-phosphate from D-erythrose 4-phosphate: step 3/5. Catalyzes the reversible conversion of 3-phosphohydroxypyruvate to phosphoserine and of 3-hydroxy-2-oxo-4-phosphonooxybutanoate to phosphohydroxythreonine. The protein is Phosphoserine aminotransferase of Buchnera aphidicola subsp. Baizongia pistaciae (strain Bp).